The following is a 1807-amino-acid chain: Triacetic acid lactone synthase cle1 (1807 aa).

Residues 107-280 (LAPLTVIIHI…ANVPVNGRYH (174 aa)) enclose the Starter acyltransferase (SAT) domain. Residues 385–795 (DTSIAIIGAA…GNNTAIIICQ (411 aa)) enclose the Ketosynthase family 3 (KS3) domain. Residues C540, H675, and H718 each act as for beta-ketoacyl synthase activity in the active site. The Malonyl-CoA:ACP transacylase (MAT) domain occupies 919-1176 (SKAVYDSSYH…LGPCIWLEAG (258 aa)). The interval 1272 to 1398 (PVIDGLISLE…GTVIVDDERT (127 aa)) is N-terminal hotdog fold. Positions 1272 to 1573 (PVIDGLISLE…FIRTSTSALQ (302 aa)) constitute a PKS/mFAS DH domain. The active-site Proton acceptor; for dehydratase activity is H1304. The interval 1416-1573 (TVFSAPRGVA…FIRTSTSALQ (158 aa)) is C-terminal hotdog fold. Catalysis depends on D1475, which acts as the Proton donor; for dehydratase activity. Positions 1605–1679 (ANVWSLTVNL…IICERITAQT (75 aa)) constitute a Carrier 1 domain. S1639 carries the post-translational modification O-(pantetheine 4'-phosphoryl)serine. The segment at 1690–1720 (GNSTSNTTSSSSQCTPSSSFESDSDTQATEL) is disordered. Over residues 1692 to 1710 (STSNTTSSSSQCTPSSSFE) the composition is skewed to low complexity. The region spanning 1721–1797 (SLSAPTMEKV…DLHALVMRRG (77 aa)) is the Carrier 2 domain. The residue at position 1757 (S1757) is an O-(pantetheine 4'-phosphoryl)serine.

Requires pantetheine 4'-phosphate as cofactor.

It participates in secondary metabolite biosynthesis; terpenoid biosynthesis. Functionally, non-reducing polyketide synthase; part of the cluster A that mediates the biosynthesis of chevalone E and its oxidized derivatives that possess a unique five-membered lactone ring and can synergistically enhance the cytotoxicity of doxorubicin (DOX) in breast cancer cells. Within the pathway, cle1 takes part to the biosynthesis of the molecular scaffold via the synthesis the alpha-pyrone triacetic acid lactone (TAL) from one molecule of acetyl-CoA and two molecules of malonyl-CoA. The molecular scaffold is commonly biosynthesized by a series of enzymes including the non-reducing polyketide synthase (NR-PKS) cle1 that produces the alpha-pyrone triacetic acid lactone (TAL); The membrane-bound prenyltransferase cle5 that accepts TAL as its substrate to perform a C-3 geranylgeranylation reaction, in which the pathway-dedicated GGPS cle6 is required to provide GGPP, the other substrate of cle5; the FAD-dependent monooxygenase Cle3 that forms an (S)-epoxide ring at the terminal olefin of the geranylgeranyl group; and the terpene cyclase Cle7 that catalyzes the cyclization of the prenyl group that yields the pentacyclic pathway intermediate chevalone E. Chevalone E can derivatize into seven new oxidized analogs by the cytochrome P450 monooxygenases cle2 (acting at C-20) and cle4 (acting at C-11 and C-12). The chain is Triacetic acid lactone synthase cle1 from Aspergillus versicolor.